The primary structure comprises 416 residues: MKKDLFLISLVSFVFFIFGNWILSLTSLDEGRNFYATLHMLRTGDFIVPYYNCNYRFEKPPMLYWLGSLSFLIFGISEFSARLISGLSAFGTTLLIYFITLKHVSREKALLSALTFPLFIHTWIESRAYVPEFTLVFFSTLGVYLFSIDRFTLGWTALALAFLTKGPVGVILPIGIYLLWRRDLKFLNFKGVLLFILIGFSWYFLMIYKFGFNFFFKFFIFENIYRFTGTYQIHNMPIYFYPLVILVSSILFLPVFLKILKDFDKRLLPFAGWFLLVLVFYSLSKNKLHHYILFSYPALSVIIGFYLTKRYIKYAYIVGSFLLLILMFGVYIYEQKRFTPKAVDFLKNSEPQKLYFYKHENSAIVAYLYRCITKENKFKKGDYVITKKKYLRDFKNYKLLIEGLEFEGKEVLIKVE.

9 consecutive transmembrane segments (helical) span residues 5–25 (LFLI…ILSL), 84–104 (ISGL…LKHV), 128–148 (AYVP…LFSI), 160–180 (LAFL…YLLW), 192–212 (VLLF…KFGF), 237–257 (PIYF…PVFL), 263–283 (FDKR…FYSL), 288–308 (LHHY…FYLT), and 312–332 (IKYA…GVYI).

This sequence belongs to the glycosyltransferase 83 family.

The protein localises to the cell membrane. This is an uncharacterized protein from Aquifex aeolicus (strain VF5).